Here is a 280-residue protein sequence, read N- to C-terminus: Large ribosomal subunit protein uL2 (280 aa).

Disordered stretches follow at residues Met1–Thr25 and His230–Gly280. The segment covering Lys257–Gly280 has biased composition (basic residues).

This sequence belongs to the universal ribosomal protein uL2 family. In terms of assembly, part of the 50S ribosomal subunit. Forms a bridge to the 30S subunit in the 70S ribosome.

Its function is as follows. One of the primary rRNA binding proteins. Required for association of the 30S and 50S subunits to form the 70S ribosome, for tRNA binding and peptide bond formation. It has been suggested to have peptidyltransferase activity; this is somewhat controversial. Makes several contacts with the 16S rRNA in the 70S ribosome. The protein is Large ribosomal subunit protein uL2 of Gloeobacter violaceus (strain ATCC 29082 / PCC 7421).